A 128-amino-acid chain; its full sequence is Glycine cleavage system H protein 2 (128 aa).

Residues 24–105 form the Lipoyl-binding domain; the sequence is TVTVGISDHA…PYSAWIFKVK (82 aa). N6-lipoyllysine is present on K65.

Belongs to the GcvH family. As to quaternary structure, the glycine cleavage system is composed of four proteins: P, T, L and H. Requires (R)-lipoate as cofactor.

The glycine cleavage system catalyzes the degradation of glycine. The H protein shuttles the methylamine group of glycine from the P protein to the T protein. The protein is Glycine cleavage system H protein 2 of Pseudomonas syringae pv. tomato (strain ATCC BAA-871 / DC3000).